The sequence spans 97 residues: MTSSPVSRVVYNGKRTSSPRSPPSSSEIFTPAHEENVRFIYEAWQGVERDLRGQVPGGERGLVEEYVEKVPNPSLKTFKPIDLSDLKRRSTQDAKKS.

The interval 1–30 (MTSSPVSRVVYNGKRTSSPRSPPSSSEIFT) is disordered. Phosphoserine occurs at positions 21 and 24. Position 30 is a phosphothreonine (threonine 30). Tyrosine 41 carries the phosphotyrosine modification. At lysine 79 the chain carries N6-acetyllysine. Positions 80-84 (PIDLS) match the PXDLS motif motif.

This sequence belongs to the MCRIP family. As to quaternary structure, interacts (unphosphorylated form, via the PXDLS motif) with CTBP1, competitively inhibiting CTBP-ZEB1 interaction. Interacts with CTBP2. Interacts with MCRIP2. Interacts with DDX6. Post-translationally, phosphorylation by MAPK3/1 (ERK1/2) regulates MCRIP1 binding to CTBP(s).

The protein localises to the nucleus. It is found in the cytoplasm. The protein resides in the stress granule. Its function is as follows. The phosphorylation status of MCRIP1 functions as a molecular switch to regulate epithelial-mesenchymal transition. Unphosphorylated MCRIP1 binds to and inhibits the transcriptional corepressor CTBP(s). When phosphorylated by MAPK/ERK, MCRIP1 releases CTBP(s) resulting in transcriptional silencing of the E-cadherin gene and induction of epithelial-mesenchymal transition. The protein is Mapk-regulated corepressor-interacting protein 1 of Homo sapiens (Human).